Reading from the N-terminus, the 499-residue chain is Probable cytochrome P450 cyp-35D1 (499 aa).

Cys-444 is a heme binding site.

It belongs to the cytochrome P450 family. It depends on heme as a cofactor. In terms of tissue distribution, expressed in hypodermis, intestine and vulva upon thiabendazole (TBZ) exposure.

Its function is as follows. Cytochromes P450 are a group of heme-thiolate monooxygenases. They oxidize a variety of structurally unrelated compounds, including steroids, fatty acids, and xenobiotics. Involved in the oxidative metabolism of thiabendazole (TBZ). Catalyzes the conversion of TBZ to its hydroxylated form. This is Probable cytochrome P450 cyp-35D1 from Caenorhabditis elegans.